The following is a 75-amino-acid chain: Small ribosomal subunit protein eS17 (75 aa).

Belongs to the eukaryotic ribosomal protein eS17 family.

This is Small ribosomal subunit protein eS17 from Thermoplasma acidophilum (strain ATCC 25905 / DSM 1728 / JCM 9062 / NBRC 15155 / AMRC-C165).